The sequence spans 548 residues: Elongator complex protein 3 (548 aa).

In terms of domain architecture, Radical SAM core spans 83–373 (RTASGIAVVA…YRVQRDIPMP (291 aa)). Cysteine 100, cysteine 110, and cysteine 113 together coordinate [4Fe-4S] cluster. Acetyl-CoA-binding positions include lysine 165, 475 to 478 (ELHV), 498 to 500 (FGM), and tyrosine 531. In terms of domain architecture, N-acetyltransferase spans 397–548 (TECRDVRTRE…EGPYMVKNLY (152 aa)).

This sequence belongs to the ELP3 family. Component of the elongator complex. It depends on [4Fe-4S] cluster as a cofactor.

It localises to the cytoplasm. The protein localises to the nucleus. The enzyme catalyses uridine(34) in tRNA + acetyl-CoA + S-adenosyl-L-methionine + H2O = 5-(carboxymethyl)uridine(34) in tRNA + 5'-deoxyadenosine + L-methionine + CoA + 2 H(+). The protein operates within tRNA modification; 5-methoxycarbonylmethyl-2-thiouridine-tRNA biosynthesis. In terms of biological role, catalytic tRNA acetyltransferase subunit of the elongator complex which is required for multiple tRNA modifications, including mcm5U (5-methoxycarbonylmethyl uridine), mcm5s2U (5-methoxycarbonylmethyl-2-thiouridine), and ncm5U (5-carbamoylmethyl uridine). In the elongator complex, acts as a tRNA uridine(34) acetyltransferase by mediating formation of carboxymethyluridine in the wobble base at position 34 in tRNAs. Involved in neurogenesis. Involved in somite development. In Danio rerio (Zebrafish), this protein is Elongator complex protein 3.